The chain runs to 398 residues: tRNA-specific 2-thiouridylase MnmA (398 aa).

ATP-binding positions include 19–26 (AMSGGVDS) and leucine 45. Cysteine 113 functions as the Nucleophile in the catalytic mechanism. Cysteine 113 and cysteine 210 form a disulfide bridge. An ATP-binding site is contributed by glycine 137. Residues 160-162 (RDQ) are interaction with tRNA. Residue cysteine 210 is the Cysteine persulfide intermediate of the active site.

This sequence belongs to the MnmA/TRMU family.

Its subcellular location is the cytoplasm. The enzyme catalyses S-sulfanyl-L-cysteinyl-[protein] + uridine(34) in tRNA + AH2 + ATP = 2-thiouridine(34) in tRNA + L-cysteinyl-[protein] + A + AMP + diphosphate + H(+). Its function is as follows. Catalyzes the 2-thiolation of uridine at the wobble position (U34) of tRNA, leading to the formation of s(2)U34. In Rhodopseudomonas palustris (strain BisB5), this protein is tRNA-specific 2-thiouridylase MnmA.